We begin with the raw amino-acid sequence, 337 residues long: Eukaryotic translation initiation factor 3 subunit H (337 aa).

The MPN domain occupies 21–153 (VQCDGLAVMK…LKAYRLTPQA (133 aa)).

It belongs to the eIF-3 subunit H family. In terms of assembly, component of the eukaryotic translation initiation factor 3 (eIF-3) complex. The eIF-3 complex interacts with pix. Interacts with mxt.

The protein resides in the cytoplasm. Component of the eukaryotic translation initiation factor 3 (eIF-3) complex, which is involved in protein synthesis of a specialized repertoire of mRNAs and, together with other initiation factors, stimulates binding of mRNA and methionyl-tRNAi to the 40S ribosome. The eIF-3 complex specifically targets and initiates translation of a subset of mRNAs involved in cell proliferation. The polypeptide is Eukaryotic translation initiation factor 3 subunit H (Drosophila ananassae (Fruit fly)).